The following is a 131-amino-acid chain: Squamosa promoter-binding protein 1 (131 aa).

Residues 1 to 10 (MDTSKGEGKR) are compositionally biased toward basic and acidic residues. Positions 1–52 (MDTSKGEGKRVIKLPGSQEQGEEEDDIGEDSKKTRALTPSGKRASGSTQRSC) are disordered. The segment at 49-126 (QRSCQVENCA…AGHNERRRKS (78 aa)) adopts an SBP-type zinc-finger fold. Zn(2+) is bound by residues C52, C57, C74, H77, C93, C96, H100, and C112. Positions 109–125 (KRSCRRRLAGHNERRRK) match the Bipartite nuclear localization signal motif.

The protein resides in the nucleus. Functionally, probable transcriptional factor. Binds to the promoter of the SQUAMOSA gene. This is Squamosa promoter-binding protein 1 (SBP1) from Antirrhinum majus (Garden snapdragon).